The sequence spans 316 residues: D-alanine--D-alanine ligase (316 aa).

One can recognise an ATP-grasp domain in the interval 107 to 303; it reads KEVFAARGLT…FEDLVERILI (197 aa). 133 to 188 is an ATP binding site; the sequence is AEGFGYPVVVKPSQEGSSVGVSIVKSPEELPSALELAFRYDDDILVERFIKGREIQ. 3 residues coordinate Mg(2+): aspartate 256, glutamate 269, and asparagine 271.

The protein belongs to the D-alanine--D-alanine ligase family. It depends on Mg(2+) as a cofactor. Mn(2+) serves as cofactor.

The protein resides in the cytoplasm. The catalysed reaction is 2 D-alanine + ATP = D-alanyl-D-alanine + ADP + phosphate + H(+). It functions in the pathway cell wall biogenesis; peptidoglycan biosynthesis. Cell wall formation. The chain is D-alanine--D-alanine ligase from Geobacter sulfurreducens (strain ATCC 51573 / DSM 12127 / PCA).